Here is a 193-residue protein sequence, read N- to C-terminus: ATP-dependent Clp protease proteolytic subunit 1 (193 aa).

S98 functions as the Nucleophile in the catalytic mechanism. H123 is a catalytic residue.

This sequence belongs to the peptidase S14 family. As to quaternary structure, fourteen ClpP subunits assemble into 2 heptameric rings which stack back to back to give a disk-like structure with a central cavity, resembling the structure of eukaryotic proteasomes.

It localises to the cytoplasm. The catalysed reaction is Hydrolysis of proteins to small peptides in the presence of ATP and magnesium. alpha-casein is the usual test substrate. In the absence of ATP, only oligopeptides shorter than five residues are hydrolyzed (such as succinyl-Leu-Tyr-|-NHMec, and Leu-Tyr-Leu-|-Tyr-Trp, in which cleavage of the -Tyr-|-Leu- and -Tyr-|-Trp bonds also occurs).. In terms of biological role, cleaves peptides in various proteins in a process that requires ATP hydrolysis. Has a chymotrypsin-like activity. Plays a major role in the degradation of misfolded proteins. The protein is ATP-dependent Clp protease proteolytic subunit 1 of Bacillus cereus (strain ZK / E33L).